Reading from the N-terminus, the 1401-residue chain is DNA-directed RNA polymerase subunit beta'' (1401 aa).

Zn(2+) contacts are provided by Cys224, Cys295, Cys302, and Cys305.

Belongs to the RNA polymerase beta' chain family. RpoC2 subfamily. In plastids the minimal PEP RNA polymerase catalytic core is composed of four subunits: alpha, beta, beta', and beta''. When a (nuclear-encoded) sigma factor is associated with the core the holoenzyme is formed, which can initiate transcription. The cofactor is Zn(2+).

The protein resides in the plastid. It localises to the chloroplast. The enzyme catalyses RNA(n) + a ribonucleoside 5'-triphosphate = RNA(n+1) + diphosphate. Its function is as follows. DNA-dependent RNA polymerase catalyzes the transcription of DNA into RNA using the four ribonucleoside triphosphates as substrates. This Ipomoea purpurea (Common morning glory) protein is DNA-directed RNA polymerase subunit beta''.